Reading from the N-terminus, the 1001-residue chain is X-linked retinitis pigmentosa GTPase regulator (1001 aa).

RCC1 repeat units follow at residues asparagine 54–threonine 105, glycine 106–aspartate 158, glycine 159–aspartate 208, glycine 209–lysine 261, valine 262–leucine 313, and glycine 314–proline 367. The tract at residues serine 404 to proline 428 is disordered. At serine 518 the chain carries Phosphoserine. 2 stretches are compositionally biased toward basic and acidic residues: residues lysine 631 to lysine 641 and glutamate 659 to serine 671. Disordered stretches follow at residues lysine 631–arginine 738, asparagine 794–glutamate 869, proline 902–serine 925, and glycine 962–leucine 1001. Acidic residues-rich tracts occupy residues serine 679–methionine 691 and glutamate 717–threonine 731. Basic and acidic residues-rich tracts occupy residues asparagine 794–alanine 818, glutamate 847–valine 857, and proline 902–lysine 911. Residues glutamine 976–leucine 1001 show a composition bias toward polar residues. At cysteine 998 the chain carries Cysteine methyl ester. The S-geranylgeranyl cysteine moiety is linked to residue cysteine 998. The propeptide at threonine 999 to leucine 1001 is removed in mature form.

As to quaternary structure, interacts with SPATA7. Interacts with PDE6D. Interacts with RPGRIP1 and RPGRIP1L; PDE6D, RPGRIP1 and RPGRIP1L may compete for the same binding sites. Interacts with NPM1. Interacts with PDE6D. Isoform 5 interacts (via N-terminus) with SMC1A and SMC3. Isoform 5 interacts with CEP290. Interacts with WHRN. Interacts with RAB37 and RAB8A (in GDP-bound forms); functions as GEF for RAB37 and RAB8A. In terms of processing, prenylated. Expressed in the retina (at protein level). Located mainly in the connecting cilia between the outer segment and inner segment and also observed in the outer plexiform layer, inner plexiform layer, and ganglion cell layer of the retinas. Isoform 1: Expressed in the retina (at protein level). Isoform 5: Expressed in the retina (at protein level). Expressed in the brain. Expressed in the testis (at protein level). Expressed in kidney (at protein level).

Its subcellular location is the golgi apparatus. The protein resides in the cytoplasm. It localises to the cytoskeleton. The protein localises to the microtubule organizing center. It is found in the centrosome. Its subcellular location is the cell projection. The protein resides in the cilium. It localises to the cilium basal body. The protein localises to the cilium axoneme. It is found in the flagellum axoneme. In terms of biological role, acts as a guanine-nucleotide releasing factor (GEF) for RAB8A and RAB37 by promoting the conversion of inactive RAB-GDP to the active form RAB-GTP. GEF activity towards RAB8A may facilitate ciliary trafficking by modulating ciliary intracellular localization of RAB8A. GEF activity towards RAB37 maintains autophagic homeostasis and retinal function. Involved in photoreceptor integrity. May control cilia formation by regulating actin stress filaments and cell contractility. May be involved in microtubule organization and regulation of transport in primary cilia. Functionally, isoform 5 may play a critical role in spermatogenesis and in intraflagellar transport processes. The sequence is that of X-linked retinitis pigmentosa GTPase regulator from Mus musculus (Mouse).